A 418-amino-acid polypeptide reads, in one-letter code: Glutamyl-tRNA reductase (418 aa).

Residues 49 to 52 (TCNR), Ser109, 114 to 116 (EPQ), and Gln120 contribute to the substrate site. Cys50 acts as the Nucleophile in catalysis. 189-194 (GAGETI) is an NADP(+) binding site.

The protein belongs to the glutamyl-tRNA reductase family. Homodimer.

It catalyses the reaction (S)-4-amino-5-oxopentanoate + tRNA(Glu) + NADP(+) = L-glutamyl-tRNA(Glu) + NADPH + H(+). Its pathway is porphyrin-containing compound metabolism; protoporphyrin-IX biosynthesis; 5-aminolevulinate from L-glutamyl-tRNA(Glu): step 1/2. Functionally, catalyzes the NADPH-dependent reduction of glutamyl-tRNA(Glu) to glutamate 1-semialdehyde (GSA). This chain is Glutamyl-tRNA reductase, found in Salmonella dublin (strain CT_02021853).